The following is a 126-amino-acid chain: Small ribosomal subunit protein uS11 (126 aa).

The protein belongs to the universal ribosomal protein uS11 family. Part of the 30S ribosomal subunit. Interacts with proteins S7 and S18. Binds to IF-3.

Functionally, located on the platform of the 30S subunit, it bridges several disparate RNA helices of the 16S rRNA. Forms part of the Shine-Dalgarno cleft in the 70S ribosome. The chain is Small ribosomal subunit protein uS11 from Desulfotalea psychrophila (strain LSv54 / DSM 12343).